A 406-amino-acid chain; its full sequence is uncharacterized protein (406 aa).

The protein resides in the plastid. It localises to the chloroplast. This is an uncharacterized protein from Euglena gracilis.